The sequence spans 213 residues: Imidazole glycerol phosphate synthase subunit HisH (213 aa).

The Glutamine amidotransferase type-1 domain maps to 4 to 213 (SIAIVDYGMG…LYRNFVHWNP (210 aa)). The active-site Nucleophile is the cysteine 83. Active-site residues include histidine 193 and glutamate 195.

As to quaternary structure, heterodimer of HisH and HisF.

The protein localises to the cytoplasm. The catalysed reaction is 5-[(5-phospho-1-deoxy-D-ribulos-1-ylimino)methylamino]-1-(5-phospho-beta-D-ribosyl)imidazole-4-carboxamide + L-glutamine = D-erythro-1-(imidazol-4-yl)glycerol 3-phosphate + 5-amino-1-(5-phospho-beta-D-ribosyl)imidazole-4-carboxamide + L-glutamate + H(+). It catalyses the reaction L-glutamine + H2O = L-glutamate + NH4(+). The protein operates within amino-acid biosynthesis; L-histidine biosynthesis; L-histidine from 5-phospho-alpha-D-ribose 1-diphosphate: step 5/9. Functionally, IGPS catalyzes the conversion of PRFAR and glutamine to IGP, AICAR and glutamate. The HisH subunit catalyzes the hydrolysis of glutamine to glutamate and ammonia as part of the synthesis of IGP and AICAR. The resulting ammonia molecule is channeled to the active site of HisF. The protein is Imidazole glycerol phosphate synthase subunit HisH of Burkholderia pseudomallei (strain K96243).